The primary structure comprises 149 residues: Myoglobin (149 aa).

Ala-2 carries the N-acetylalanine modification. Residues 2-143 form the Globin domain; the sequence is ADWDKVNSVW…ICSDIEKEYK (142 aa). A heme b-binding site is contributed by His-89.

This sequence belongs to the globin family. Monomeric.

The protein resides in the cytoplasm. Its subcellular location is the sarcoplasm. It catalyses the reaction Fe(III)-heme b-[protein] + nitric oxide + H2O = Fe(II)-heme b-[protein] + nitrite + 2 H(+). The catalysed reaction is H2O2 + AH2 = A + 2 H2O. Functionally, monomeric heme protein which primary function is to store oxygen and facilitate its diffusion within muscle tissues. Reversibly binds oxygen through a pentacoordinated heme iron and enables its timely and efficient release as needed during periods of heightened demand. Depending on the oxidative conditions of tissues and cells, and in addition to its ability to bind oxygen, it also has a nitrite reductase activity whereby it regulates the production of bioactive nitric oxide. Under stress conditions, like hypoxia and anoxia, it also protects cells against reactive oxygen species thanks to its pseudoperoxidase activity. In Galeorhinus galeus (Tope shark), this protein is Myoglobin (mb).